Consider the following 134-residue polypeptide: Small ribosomal subunit protein uS11 (134 aa).

Residues 115–134 form a disordered region; it reads VTPIPTDSTRRKGGRRGRRL. Basic residues predominate over residues 125–134; sequence RKGGRRGRRL.

This sequence belongs to the universal ribosomal protein uS11 family.

The polypeptide is Small ribosomal subunit protein uS11 (RPS14) (Syntrichia ruralis (Great hairy screw-moss)).